We begin with the raw amino-acid sequence, 361 residues long: ATP-dependent 6-phosphofructokinase 1 (361 aa).

Residues Gly-14, 79 to 80 (KG), and 116 to 119 (GDGS) contribute to the ATP site. Asp-117 contacts Mg(2+). Substrate is bound by residues 140 to 142 (TID), Arg-177, 184 to 186 (MGR), Glu-237, Arg-278, and 284 to 287 (HIQR). Asp-142 serves as the catalytic Proton acceptor.

The protein belongs to the phosphofructokinase type A (PFKA) family. Mixed-substrate PFK group III subfamily. As to quaternary structure, homodimer or homotetramer. It depends on Mg(2+) as a cofactor.

The protein resides in the cytoplasm. The enzyme catalyses beta-D-fructose 6-phosphate + ATP = beta-D-fructose 1,6-bisphosphate + ADP + H(+). Its pathway is carbohydrate degradation; glycolysis; D-glyceraldehyde 3-phosphate and glycerone phosphate from D-glucose: step 3/4. Its function is as follows. Catalyzes the phosphorylation of D-fructose 6-phosphate to fructose 1,6-bisphosphate by ATP, the first committing step of glycolysis. The polypeptide is ATP-dependent 6-phosphofructokinase 1 (Synechocystis sp. (strain ATCC 27184 / PCC 6803 / Kazusa)).